Reading from the N-terminus, the 403-residue chain is Glycerophosphocholine acyltransferase 1 (403 aa).

Residues 1–112 (MDHLEFDENT…SGKVVRFRDK (112 aa)) lie on the Cytoplasmic side of the membrane. A helical transmembrane segment spans residues 113-133 (LSFALGVSTCILTALLVGMAP). Over 134–137 (ESMH) the chain is Lumenal. A helical transmembrane segment spans residues 138–155 (LWYTIQLFVYLPLRYYTY). The Cytoplasmic portion of the chain corresponds to 156–161 (QRKGYE). The helical transmembrane segment at 162 to 182 (YFIADFCYWGNILLLVYIWIF) threads the bilayer. Topologically, residues 183–186 (PESR) are lumenal. The helical transmembrane segment at 187 to 207 (RLFILSYSISYGTLAWSVVAW) threads the bilayer. Residues 208 to 218 (RNSLLFHSIDK) are Cytoplasmic-facing. Residues 219–239 (ITSLFIHFFPPLVLHTIVHLT) traverse the membrane as a helical segment. An N-linked (GlcNAc...) asparagine glycan is attached at Asn240. Topologically, residues 240 to 262 (NKSYLKDRFPAVLKVKKIDLLSS) are lumenal. The chain crosses the membrane as a helical span at residues 263–283 (VEIASFFYALWQIWYYFFIQV). The Cytoplasmic portion of the chain corresponds to 284 to 322 (GKQKQIQEGRPTSFTWLSKAYSKTKLGRAVAKLPQNLQP). Residues 323 to 343 (FVFMIIQYLYSITTMLPCSLW) traverse the membrane as a helical segment. Over 344–352 (YNNKLYSTA) the chain is Lumenal. A helical membrane pass occupies residues 353–373 (FLALIFGWSVWNGASYYIDVF). Residues 374 to 403 (GRRFQKELEALRQQLAETPTNSGSSSALSR) are Cytoplasmic-facing.

Belongs to the GPC1 family.

It is found in the endoplasmic reticulum membrane. It localises to the golgi apparatus membrane. It carries out the reaction sn-glycerol 3-phosphocholine + an acyl-CoA = a 1-acyl-sn-glycero-3-phosphocholine + CoA. The catalysed reaction is sn-glycero-3-phosphoethanolamine + an acyl-CoA = a monoacyl-sn-glycero-3-phosphoethanolamine + CoA. The enzyme catalyses sn-glycero-3-phosphoethanolamine + (9Z)-octadecenoyl-CoA = (9Z-octadecenoyl)-sn-glycero-3-phosphoethanolamine + CoA. In terms of biological role, glycerophosphocholine acyltransferase (GPCAT) that utilizes acyl-CoA to acylate glycero-3-phosphocholine (GPC), forming lysophosphatidylcholine (LPC). Shows broad acyl specificities with a preference for 16:0-CoA, polyunsaturated acyl-CoA, and the hydroxylated ricinoleoyl-CoA. Also catalyzes the acylation of glycero-3-phosphoethanolamine (GPE) with acyl-CoA. In addition to acyl-CoA, GPCAT efficiently utilizes LPC and lysophosphatidylethanolamine (LPE) as acyl donors in the acylation of GPC. Contributes to the maintenance of phosphatidylcholine (PC) homeostasis and might also have specific functions in acyl editing of PC, such as transferring acyl groups modified at the sn-2 position of PC to the sn-1. The protein is Glycerophosphocholine acyltransferase 1 of Schizosaccharomyces pombe (strain 972 / ATCC 24843) (Fission yeast).